A 564-amino-acid chain; its full sequence is Dihydroxy-acid dehydratase (564 aa).

C55 provides a ligand contact to [2Fe-2S] cluster. D87 contributes to the Mg(2+) binding site. Residue C128 coordinates [2Fe-2S] cluster. 2 residues coordinate Mg(2+): D129 and K130. K130 is subject to N6-carboxylysine. C200 is a [2Fe-2S] cluster binding site. E452 contacts Mg(2+). Residue S478 is the Proton acceptor of the active site.

This sequence belongs to the IlvD/Edd family. In terms of assembly, homodimer. It depends on [2Fe-2S] cluster as a cofactor. Mg(2+) is required as a cofactor.

The catalysed reaction is (2R)-2,3-dihydroxy-3-methylbutanoate = 3-methyl-2-oxobutanoate + H2O. The enzyme catalyses (2R,3R)-2,3-dihydroxy-3-methylpentanoate = (S)-3-methyl-2-oxopentanoate + H2O. The protein operates within amino-acid biosynthesis; L-isoleucine biosynthesis; L-isoleucine from 2-oxobutanoate: step 3/4. It functions in the pathway amino-acid biosynthesis; L-valine biosynthesis; L-valine from pyruvate: step 3/4. In terms of biological role, functions in the biosynthesis of branched-chain amino acids. Catalyzes the dehydration of (2R,3R)-2,3-dihydroxy-3-methylpentanoate (2,3-dihydroxy-3-methylvalerate) into 2-oxo-3-methylpentanoate (2-oxo-3-methylvalerate) and of (2R)-2,3-dihydroxy-3-methylbutanoate (2,3-dihydroxyisovalerate) into 2-oxo-3-methylbutanoate (2-oxoisovalerate), the penultimate precursor to L-isoleucine and L-valine, respectively. In Polaromonas sp. (strain JS666 / ATCC BAA-500), this protein is Dihydroxy-acid dehydratase.